The following is a 398-amino-acid chain: Phosphoglycerate kinase (398 aa).

Residues 22–24, Arg-38, 61–64, Arg-120, and Arg-153 each bind substrate; these read DFN and HLGR. ATP-binding positions include Lys-204, Glu-326, and 352 to 355; that span reads GGDT.

This sequence belongs to the phosphoglycerate kinase family. In terms of assembly, monomer.

The protein resides in the cytoplasm. It catalyses the reaction (2R)-3-phosphoglycerate + ATP = (2R)-3-phospho-glyceroyl phosphate + ADP. It functions in the pathway carbohydrate degradation; glycolysis; pyruvate from D-glyceraldehyde 3-phosphate: step 2/5. The protein is Phosphoglycerate kinase of Geobacter metallireducens (strain ATCC 53774 / DSM 7210 / GS-15).